The sequence spans 259 residues: Global transcriptional regulator CodY (259 aa).

Residues M1–L155 are GAF domain. Residues A203–R222 constitute a DNA-binding region (H-T-H motif). S215 is subject to Phosphoserine.

This sequence belongs to the CodY family.

It localises to the cytoplasm. Its function is as follows. DNA-binding global transcriptional regulator which is involved in the adaptive response to starvation and acts by directly or indirectly controlling the expression of numerous genes in response to nutrient availability. During rapid exponential growth, CodY is highly active and represses genes whose products allow adaptation to nutrient depletion. This Bacillus cereus (strain ATCC 10987 / NRS 248) protein is Global transcriptional regulator CodY.